Reading from the N-terminus, the 259-residue chain is MKGFYMYYLGIILASVVGYFLGSISWSIIIVKKVGNIDIRTIGSGNPGATNTVRALGKKWGLVVAFLDALKVIFTSIIAILLSLIPSSLFSQTSYFIPCIFALIGHCFPIYYKFKGGKAVSCFLGLLFVVNILYLIIFLIVWFISVAISRKVSVASIFSAFFVLIIMWIPYLNGVSYFIWQWNGLEQFSVAWKNYILFSLLNSFHYWFSNIWASGMLEGNIIVLIGGLILGLRHSQNIKRIKNKTEPDTFPRKKQAIKN.

Transmembrane regions (helical) follow at residues 11 to 31, 62 to 82, 93 to 112, 124 to 144, 152 to 172, 188 to 208, and 211 to 231; these read IILA…IIIV, LVVA…AILL, TSYF…PIYY, LGLL…VWFI, VSVA…IPYL, FSVA…HYWF, and IWAS…LILG.

This sequence belongs to the PlsY family. In terms of assembly, probably interacts with PlsX.

The protein resides in the cell membrane. The enzyme catalyses an acyl phosphate + sn-glycerol 3-phosphate = a 1-acyl-sn-glycero-3-phosphate + phosphate. Its pathway is lipid metabolism; phospholipid metabolism. In terms of biological role, catalyzes the transfer of an acyl group from acyl-phosphate (acyl-PO(4)) to glycerol-3-phosphate (G3P) to form lysophosphatidic acid (LPA). This enzyme utilizes acyl-phosphate as fatty acyl donor, but not acyl-CoA or acyl-ACP. This Mycoplasma capricolum subsp. capricolum (strain California kid / ATCC 27343 / NCTC 10154) protein is Glycerol-3-phosphate acyltransferase.